A 315-amino-acid chain; its full sequence is uncharacterized protein (315 aa).

2 coiled-coil regions span residues 184-212 (AGEE…TPEQ) and 238-275 (EEHR…YKEK).

It belongs to the IIV-6 287R family.

This is an uncharacterized protein from Acheta domesticus (House cricket).